The chain runs to 322 residues: GDSL esterase/lipase At5g03600 (322 aa).

Residue Ser21 is the Nucleophile of the active site. Active-site residues include Asp295 and His298.

Belongs to the 'GDSL' lipolytic enzyme family.

This chain is GDSL esterase/lipase At5g03600, found in Arabidopsis thaliana (Mouse-ear cress).